Here is a 426-residue protein sequence, read N- to C-terminus: Cytochrome b-c1 complex subunit 2, mitochondrial (426 aa).

Residues 1–30 (MKSFTRNLRRFQTPRRNLHGISYTPKKVEG) constitute a mitochondrion transit peptide.

It belongs to the peptidase M16 family. UQCRC2/QCR2 subfamily. Component of the ubiquinol-cytochrome c oxidoreductase (cytochrome b-c1 complex, complex III, CIII), a multisubunit enzyme composed of 3 respiratory subunits cytochrome b, cytochrome c1 and Rieske protein, 2 core protein subunits, and additional low-molecular weight protein subunits. The complex exists as an obligatory dimer and forms supercomplexes (SCs) in the inner mitochondrial membrane with cytochrome c oxidase (complex IV, CIV).

It localises to the mitochondrion inner membrane. Component of the ubiquinol-cytochrome c oxidoreductase, a multisubunit transmembrane complex that is part of the mitochondrial electron transport chain which drives oxidative phosphorylation. The respiratory chain contains 3 multisubunit complexes succinate dehydrogenase (complex II, CII), ubiquinol-cytochrome c oxidoreductase (cytochrome b-c1 complex, complex III, CIII) and cytochrome c oxidase (complex IV, CIV), that cooperate to transfer electrons derived from NADH and succinate to molecular oxygen, creating an electrochemical gradient over the inner membrane that drives transmembrane transport and the ATP synthase. The cytochrome b-c1 complex catalyzes electron transfer from ubiquinol to cytochrome c, linking this redox reaction to translocation of protons across the mitochondrial inner membrane, with protons being carried across the membrane as hydrogens on the quinol. In the process called Q cycle, 2 protons are consumed from the matrix, 4 protons are released into the intermembrane space and 2 electrons are passed to cytochrome c. This is Cytochrome b-c1 complex subunit 2, mitochondrial (qcr2) from Schizosaccharomyces pombe (strain 972 / ATCC 24843) (Fission yeast).